Consider the following 279-residue polypeptide: 2-dehydro-3-deoxyphosphooctonate aldolase (279 aa).

It belongs to the KdsA family.

Its subcellular location is the cytoplasm. The catalysed reaction is D-arabinose 5-phosphate + phosphoenolpyruvate + H2O = 3-deoxy-alpha-D-manno-2-octulosonate-8-phosphate + phosphate. The protein operates within carbohydrate biosynthesis; 3-deoxy-D-manno-octulosonate biosynthesis; 3-deoxy-D-manno-octulosonate from D-ribulose 5-phosphate: step 2/3. It functions in the pathway bacterial outer membrane biogenesis; lipopolysaccharide biosynthesis. This Azoarcus sp. (strain BH72) protein is 2-dehydro-3-deoxyphosphooctonate aldolase.